Reading from the N-terminus, the 200-residue chain is Large ribosomal subunit protein bL25 (200 aa).

The protein belongs to the bacterial ribosomal protein bL25 family. CTC subfamily. As to quaternary structure, part of the 50S ribosomal subunit; part of the 5S rRNA/L5/L18/L25 subcomplex. Contacts the 5S rRNA. Binds to the 5S rRNA independently of L5 and L18.

In terms of biological role, this is one of the proteins that binds to the 5S RNA in the ribosome where it forms part of the central protuberance. This Corynebacterium glutamicum (strain ATCC 13032 / DSM 20300 / JCM 1318 / BCRC 11384 / CCUG 27702 / LMG 3730 / NBRC 12168 / NCIMB 10025 / NRRL B-2784 / 534) protein is Large ribosomal subunit protein bL25.